The sequence spans 401 residues: Argininosuccinate synthase (401 aa).

ATP is bound at residue 9 to 17; the sequence is AYSGGLDTS. Tyr86 is a binding site for L-citrulline. Gly116 provides a ligand contact to ATP. L-aspartate contacts are provided by Thr118, Asn122, and Asp123. Asn122 is an L-citrulline binding site. Positions 126, 174, 183, 259, and 271 each coordinate L-citrulline.

Belongs to the argininosuccinate synthase family. Type 1 subfamily. In terms of assembly, homotetramer.

It localises to the cytoplasm. The enzyme catalyses L-citrulline + L-aspartate + ATP = 2-(N(omega)-L-arginino)succinate + AMP + diphosphate + H(+). It participates in amino-acid biosynthesis; L-arginine biosynthesis; L-arginine from L-ornithine and carbamoyl phosphate: step 2/3. The protein is Argininosuccinate synthase of Bacillus cereus (strain AH820).